We begin with the raw amino-acid sequence, 125 residues long: Ribonuclease P protein component (125 aa).

The protein belongs to the RnpA family. In terms of assembly, consists of a catalytic RNA component (M1 or rnpB) and a protein subunit.

It carries out the reaction Endonucleolytic cleavage of RNA, removing 5'-extranucleotides from tRNA precursor.. RNaseP catalyzes the removal of the 5'-leader sequence from pre-tRNA to produce the mature 5'-terminus. It can also cleave other RNA substrates such as 4.5S RNA. The protein component plays an auxiliary but essential role in vivo by binding to the 5'-leader sequence and broadening the substrate specificity of the ribozyme. This chain is Ribonuclease P protein component, found in Clostridium perfringens (strain ATCC 13124 / DSM 756 / JCM 1290 / NCIMB 6125 / NCTC 8237 / Type A).